Consider the following 530-residue polypeptide: Chaperone Ric-8A (530 aa).

S435 is subject to Phosphoserine. Phosphothreonine is present on residues T440 and T442. Phosphoserine is present on residues S501, S522, S523, and S527.

The protein belongs to the synembryn family. In terms of assembly, interacts with GDP-bound G alpha proteins GNAI1, GNAO1 and GNAQ, and with GNA13 with lower affinity. Does not interact with G-alpha proteins when they are in complex with subunits beta and gamma. Interacts (via C-terminus) with RGS14; the interaction stimulates the dissociation of the complex between RGS14 and the active GTP-bound form of GNAI1. Interacts with NCS1; interaction is favored in the absence of Ca(2+) and myristoylation of NCS1 is not required. In terms of processing, phosphorylated at Ser-435 and Thr-440 by CK2, stabilizing its interface with G alpha proteins.

It is found in the cytoplasm. Its subcellular location is the cell cortex. In terms of biological role, chaperone that specifically binds and folds nascent G alpha proteins prior to G protein heterotrimer formation, promoting their stability and activity: folds GNAI1, GNAO1, GNA13 and GNAQ. Does not fold G(s) G-alpha proteins GNAS nor GNAL. Also acts as a guanine nucleotide exchange factor (GEF) for G alpha proteins by stimulating exchange of bound GDP for free GTP. Involved in regulation of microtubule pulling forces during mitotic movement of chromosomes by stimulating G(i)-alpha protein (GNAI1), possibly leading to release G(i)-alpha-GTP and NuMA proteins from the NuMA-GPSM2-G(i)-alpha-GDP complex. Also acts as an activator for G(q)-alpha (GNAQ) protein by enhancing the G(q)-coupled receptor-mediated ERK activation. This Macaca fascicularis (Crab-eating macaque) protein is Chaperone Ric-8A (RIC8A).